Consider the following 276-residue polypeptide: MSLLTADKKVQVDINKNDKKAPVNNKNIVYDTKDLNLWYGETHALKDINLAINEKEVTAIIGPSGCGKSTYIKTLNRMVELVPTVKTTGTITYRGKNILDRSFKVEDLRTHVGMVFQKPNPFPKSIYENVAYGPKIHGIKNKKVLDEIVEKSLRGASIWDEVKDRLNENAYGLSGGQQQRLCIARCLAIEPNVILMDEPTSALDPKSTLRIEELVQELKKDYSIIIVTHNMQQAARISDKTAFFLNGEVVEFDDTDRIFTKPSDQRTEDYISGRFG.

An ABC transporter domain is found at valine 23–isoleucine 271. Residue glycine 62–serine 69 participates in ATP binding.

This sequence belongs to the ABC transporter superfamily. Phosphate importer (TC 3.A.1.7) family. As to quaternary structure, the complex is composed of two ATP-binding proteins (PstB), two transmembrane proteins (PstC and PstA) and a solute-binding protein (PstS).

It is found in the cell membrane. The catalysed reaction is phosphate(out) + ATP + H2O = ADP + 2 phosphate(in) + H(+). Its function is as follows. Part of the ABC transporter complex PstSACB involved in phosphate import. Responsible for energy coupling to the transport system. In Oceanobacillus iheyensis (strain DSM 14371 / CIP 107618 / JCM 11309 / KCTC 3954 / HTE831), this protein is Phosphate import ATP-binding protein PstB.